We begin with the raw amino-acid sequence, 187 residues long: Large ribosomal subunit protein uL5 (187 aa).

Belongs to the universal ribosomal protein uL5 family. Part of the 50S ribosomal subunit; part of the 5S rRNA/L5/L18/L25 subcomplex. Contacts the 5S rRNA and the P site tRNA. Forms a bridge to the 30S subunit in the 70S ribosome.

Functionally, this is one of the proteins that bind and probably mediate the attachment of the 5S RNA into the large ribosomal subunit, where it forms part of the central protuberance. In the 70S ribosome it contacts protein S13 of the 30S subunit (bridge B1b), connecting the 2 subunits; this bridge is implicated in subunit movement. Contacts the P site tRNA; the 5S rRNA and some of its associated proteins might help stabilize positioning of ribosome-bound tRNAs. The chain is Large ribosomal subunit protein uL5 from Mycolicibacterium smegmatis (strain ATCC 700084 / mc(2)155) (Mycobacterium smegmatis).